The chain runs to 92 residues: C-C motif chemokine 4 (92 aa).

A signal peptide spans 1–23 (MKLCVTVLSLLMLVAAFCSPALS). Disulfide bonds link Cys-34/Cys-58 and Cys-35/Cys-74.

This sequence belongs to the intercrine beta (chemokine CC) family. In terms of assembly, homodimer and heterodimer of MIP-1-alpha(4-69) and MIP-1-beta(3-69). In terms of processing, N-terminal processed form MIP-1-beta(3-69) is produced by proteolytic cleavage after secretion from peripheral blood lymphocytes.

Its subcellular location is the secreted. Monokine with inflammatory and chemokinetic properties. Binds to CCR5. One of the major HIV-suppressive factors produced by CD8+ T-cells. Recombinant MIP-1-beta induces a dose-dependent inhibition of different strains of HIV-1, HIV-2, and simian immunodeficiency virus (SIV). The processed form MIP-1-beta(3-69) retains the abilities to induce down-modulation of surface expression of the chemokine receptor CCR5 and to inhibit the CCR5-mediated entry of HIV-1 in T-cells. MIP-1-beta(3-69) is also a ligand for CCR1 and CCR2 isoform B. This chain is C-C motif chemokine 4 (CCL4), found in Homo sapiens (Human).